The following is a 181-amino-acid chain: Ribosome maturation factor RimP (181 aa).

Belongs to the RimP family.

Its subcellular location is the cytoplasm. Functionally, required for maturation of 30S ribosomal subunits. The sequence is that of Ribosome maturation factor RimP from Mycolicibacterium smegmatis (strain ATCC 700084 / mc(2)155) (Mycobacterium smegmatis).